The chain runs to 689 residues: Glycine--tRNA ligase beta subunit (689 aa).

It belongs to the class-II aminoacyl-tRNA synthetase family. In terms of assembly, tetramer of two alpha and two beta subunits.

It is found in the cytoplasm. It carries out the reaction tRNA(Gly) + glycine + ATP = glycyl-tRNA(Gly) + AMP + diphosphate. In Salmonella dublin (strain CT_02021853), this protein is Glycine--tRNA ligase beta subunit.